The primary structure comprises 744 residues: Phosphoribosylformylglycinamidine synthase subunit PurL (744 aa).

H50 is a catalytic residue. 2 residues coordinate ATP: Y53 and K92. E94 serves as a coordination point for Mg(2+). Substrate-binding positions include 95–98 (SHNH) and R117. The active-site Proton acceptor is H96. Position 118 (D118) interacts with Mg(2+). Position 241 (Q241) interacts with substrate. D269 serves as a coordination point for Mg(2+). 313 to 315 (ESQ) serves as a coordination point for substrate. ATP is bound by residues D494 and G531. A Mg(2+)-binding site is contributed by N532. S534 serves as a coordination point for substrate.

This sequence belongs to the FGAMS family. In terms of assembly, monomer. Part of the FGAM synthase complex composed of 1 PurL, 1 PurQ and 2 PurS subunits.

It localises to the cytoplasm. It carries out the reaction N(2)-formyl-N(1)-(5-phospho-beta-D-ribosyl)glycinamide + L-glutamine + ATP + H2O = 2-formamido-N(1)-(5-O-phospho-beta-D-ribosyl)acetamidine + L-glutamate + ADP + phosphate + H(+). Its pathway is purine metabolism; IMP biosynthesis via de novo pathway; 5-amino-1-(5-phospho-D-ribosyl)imidazole from N(2)-formyl-N(1)-(5-phospho-D-ribosyl)glycinamide: step 1/2. Functionally, part of the phosphoribosylformylglycinamidine synthase complex involved in the purines biosynthetic pathway. Catalyzes the ATP-dependent conversion of formylglycinamide ribonucleotide (FGAR) and glutamine to yield formylglycinamidine ribonucleotide (FGAM) and glutamate. The FGAM synthase complex is composed of three subunits. PurQ produces an ammonia molecule by converting glutamine to glutamate. PurL transfers the ammonia molecule to FGAR to form FGAM in an ATP-dependent manner. PurS interacts with PurQ and PurL and is thought to assist in the transfer of the ammonia molecule from PurQ to PurL. The polypeptide is Phosphoribosylformylglycinamidine synthase subunit PurL (Chelativorans sp. (strain BNC1)).